Here is a 137-residue protein sequence, read N- to C-terminus: Large ribosomal subunit protein uL16 (137 aa).

It belongs to the universal ribosomal protein uL16 family. As to quaternary structure, part of the 50S ribosomal subunit.

In terms of biological role, binds 23S rRNA and is also seen to make contacts with the A and possibly P site tRNAs. The protein is Large ribosomal subunit protein uL16 of Sorangium cellulosum (strain So ce56) (Polyangium cellulosum (strain So ce56)).